We begin with the raw amino-acid sequence, 240 residues long: MEKPKYKRIVLKLSGEALAGEQGNGINPTVIQSIAKQVKEIAELEVEVAVVVGGGNLWRGKTGSDLGMDRATADYMGMLATVMNSLALQDSLETLGIQSRVQTSIEMRQVAEPYIRRKAIRHLEKKRVVIFAAGTGNPYFSTDTTAALRAAEIEADVILMAKNNVDGVYNADPRKDESAVKYESLSYLDVLKDGLEVMDSTASSLCMDNDIPLIVFSIMEEGNIKRAVIGESIGTIVRGK.

12-15 (KLSG) provides a ligand contact to ATP. Positions 20–25 (GEQGNG) are involved in allosteric activation by GTP. Gly-54 is a binding site for UMP. ATP is bound by residues Gly-55 and Arg-59. UMP-binding positions include Asp-74 and 135 to 142 (TGNPYFST). ATP is bound by residues Asn-163, Tyr-169, and Asp-172.

The protein belongs to the UMP kinase family. Homohexamer. Interacts with BrxC.

It localises to the cytoplasm. The enzyme catalyses UMP + ATP = UDP + ADP. Its pathway is pyrimidine metabolism; CTP biosynthesis via de novo pathway; UDP from UMP (UMPK route): step 1/1. Its activity is regulated as follows. Allosterically activated by GTP. Can also be activated by dGTP and 3'-anthraniloyl-2'-deoxyguanosine-5'-triphosphate (Ant-dGTP). Inhibited by UTP, 5-bromo-UTP and 5-iodo-UTP. Its function is as follows. Catalyzes the reversible phosphorylation of UMP to UDP, with ATP or dATP as the most efficient phosphate donors. Is also able to phosphorylate 5-fluoro-UMP and 6-aza-UMP. In Bacillus subtilis (strain 168), this protein is Uridylate kinase (pyrH).